The following is a 190-amino-acid chain: Elongation factor P-like protein (190 aa).

This sequence belongs to the elongation factor P family.

This chain is Elongation factor P-like protein, found in Cronobacter sakazakii (strain ATCC BAA-894) (Enterobacter sakazakii).